Here is a 460-residue protein sequence, read N- to C-terminus: UDP-N-acetylmuramoylalanine--D-glutamate ligase (460 aa).

120–126 contributes to the ATP binding site; sequence GSNGKTT.

The protein belongs to the MurCDEF family.

It localises to the cytoplasm. It carries out the reaction UDP-N-acetyl-alpha-D-muramoyl-L-alanine + D-glutamate + ATP = UDP-N-acetyl-alpha-D-muramoyl-L-alanyl-D-glutamate + ADP + phosphate + H(+). Its pathway is cell wall biogenesis; peptidoglycan biosynthesis. Its function is as follows. Cell wall formation. Catalyzes the addition of glutamate to the nucleotide precursor UDP-N-acetylmuramoyl-L-alanine (UMA). The sequence is that of UDP-N-acetylmuramoylalanine--D-glutamate ligase from Lactobacillus johnsonii (strain CNCM I-12250 / La1 / NCC 533).